Here is a 546-residue protein sequence, read N- to C-terminus: Chaperonin GroEL 2 (546 aa).

ATP-binding positions include 30–33 (TLGP), Lys51, 87–91 (DGTTT), Gly415, and Asp495.

It belongs to the chaperonin (HSP60) family. In terms of assembly, forms a cylinder of 14 subunits composed of two heptameric rings stacked back-to-back. Interacts with the co-chaperonin GroES.

Its subcellular location is the cytoplasm. The catalysed reaction is ATP + H2O + a folded polypeptide = ADP + phosphate + an unfolded polypeptide.. Its function is as follows. Together with its co-chaperonin GroES, plays an essential role in assisting protein folding. The GroEL-GroES system forms a nano-cage that allows encapsulation of the non-native substrate proteins and provides a physical environment optimized to promote and accelerate protein folding. This chain is Chaperonin GroEL 2, found in Burkholderia cenocepacia (strain HI2424).